Consider the following 1058-residue polypeptide: Carbamoyl phosphate synthase large chain (1058 aa).

Residues 1-401 (MPKRTDIKKI…SLLKACRSLE (401 aa)) form a carboxyphosphate synthetic domain region. Arg129, Arg169, Gly175, Gly176, Lys208, Ile210, Glu215, Gly241, Ile242, His243, Gln284, and Glu298 together coordinate ATP. The region spanning 133-327 (KALMKALKQP…IAKIAAKIAI (195 aa)) is the ATP-grasp 1 domain. The Mg(2+) site is built by Gln284, Glu298, and Asn300. Mn(2+)-binding residues include Gln284, Glu298, and Asn300. The interval 402–546 (IGIYHNECKE…YSTYAFENES (145 aa)) is oligomerization domain. Residues 547-929 (QASPNKSILV…ALYKAFEASY (383 aa)) form a carbamoyl phosphate synthetic domain region. Residues 671–861 (EKALHDINIP…MAQVATKLIL (191 aa)) form the ATP-grasp 2 domain. ATP contacts are provided by Arg707, Ser746, Ile748, Glu752, Gly777, Val778, His779, Ser780, Gln820, and Glu832. 3 residues coordinate Mg(2+): Gln820, Glu832, and Asn834. Mn(2+) is bound by residues Gln820, Glu832, and Asn834. In terms of domain architecture, MGS-like spans 930–1058 (MHVPDFGNII…ESRSFSIQSL (129 aa)). Residues 930–1058 (MHVPDFGNII…ESRSFSIQSL (129 aa)) are allosteric domain.

This sequence belongs to the CarB family. As to quaternary structure, composed of two chains; the small (or glutamine) chain promotes the hydrolysis of glutamine to ammonia, which is used by the large (or ammonia) chain to synthesize carbamoyl phosphate. Tetramer of heterodimers (alpha,beta)4. The cofactor is Mg(2+). Requires Mn(2+) as cofactor.

The catalysed reaction is hydrogencarbonate + L-glutamine + 2 ATP + H2O = carbamoyl phosphate + L-glutamate + 2 ADP + phosphate + 2 H(+). It carries out the reaction hydrogencarbonate + NH4(+) + 2 ATP = carbamoyl phosphate + 2 ADP + phosphate + 2 H(+). The protein operates within amino-acid biosynthesis; L-arginine biosynthesis; carbamoyl phosphate from bicarbonate: step 1/1. It participates in pyrimidine metabolism; UMP biosynthesis via de novo pathway; (S)-dihydroorotate from bicarbonate: step 1/3. Its function is as follows. Large subunit of the glutamine-dependent carbamoyl phosphate synthetase (CPSase). CPSase catalyzes the formation of carbamoyl phosphate from the ammonia moiety of glutamine, carbonate, and phosphate donated by ATP, constituting the first step of 2 biosynthetic pathways, one leading to arginine and/or urea and the other to pyrimidine nucleotides. The large subunit (synthetase) binds the substrates ammonia (free or transferred from glutamine from the small subunit), hydrogencarbonate and ATP and carries out an ATP-coupled ligase reaction, activating hydrogencarbonate by forming carboxy phosphate which reacts with ammonia to form carbamoyl phosphate. This is Carbamoyl phosphate synthase large chain from Streptococcus uberis (strain ATCC BAA-854 / 0140J).